We begin with the raw amino-acid sequence, 194 residues long: Protein GrpE 1 (194 aa).

The tract at residues 1 to 22 is disordered; sequence MIHNEEEQLEKKIEKNQDPKIN.

The protein belongs to the GrpE family. In terms of assembly, homodimer.

The protein resides in the cytoplasm. Functionally, participates actively in the response to hyperosmotic and heat shock by preventing the aggregation of stress-denatured proteins, in association with DnaK and GrpE. It is the nucleotide exchange factor for DnaK and may function as a thermosensor. Unfolded proteins bind initially to DnaJ; upon interaction with the DnaJ-bound protein, DnaK hydrolyzes its bound ATP, resulting in the formation of a stable complex. GrpE releases ADP from DnaK; ATP binding to DnaK triggers the release of the substrate protein, thus completing the reaction cycle. Several rounds of ATP-dependent interactions between DnaJ, DnaK and GrpE are required for fully efficient folding. The sequence is that of Protein GrpE 1 from Buchnera aphidicola subsp. Acyrthosiphon pisum (strain APS) (Acyrthosiphon pisum symbiotic bacterium).